The primary structure comprises 572 residues: Proline--tRNA ligase (572 aa).

This sequence belongs to the class-II aminoacyl-tRNA synthetase family. ProS type 1 subfamily. In terms of assembly, homodimer.

It localises to the cytoplasm. The catalysed reaction is tRNA(Pro) + L-proline + ATP = L-prolyl-tRNA(Pro) + AMP + diphosphate. Its function is as follows. Catalyzes the attachment of proline to tRNA(Pro) in a two-step reaction: proline is first activated by ATP to form Pro-AMP and then transferred to the acceptor end of tRNA(Pro). As ProRS can inadvertently accommodate and process non-cognate amino acids such as alanine and cysteine, to avoid such errors it has two additional distinct editing activities against alanine. One activity is designated as 'pretransfer' editing and involves the tRNA(Pro)-independent hydrolysis of activated Ala-AMP. The other activity is designated 'posttransfer' editing and involves deacylation of mischarged Ala-tRNA(Pro). The misacylated Cys-tRNA(Pro) is not edited by ProRS. This chain is Proline--tRNA ligase, found in Erwinia tasmaniensis (strain DSM 17950 / CFBP 7177 / CIP 109463 / NCPPB 4357 / Et1/99).